Consider the following 178-residue polypeptide: Fatty-acid and retinol-binding protein 1 (178 aa).

The first 16 residues, 1 to 16 (MYHQLILMALIGVIMA), serve as a signal peptide directing secretion. Residues asparagine 44 and asparagine 75 are each glycosylated (N-linked (GlcNAc...) asparagine). Coiled coils occupy residues 67 to 89 (DAAL…ELRN) and 123 to 154 (KLDM…LKAT). Asparagine 157 is a glycosylation site (N-linked (GlcNAc...) asparagine).

This sequence belongs to the fatty-acid and retinol-binding protein (FARBP) family. N-glycosylated.

The protein resides in the secreted. Binds retinol and different fatty acids. In Onchocerca gutturosa, this protein is Fatty-acid and retinol-binding protein 1.